A 372-amino-acid chain; its full sequence is ATP phosphoribosyltransferase regulatory subunit (372 aa).

Belongs to the class-II aminoacyl-tRNA synthetase family. HisZ subfamily. Heteromultimer composed of HisG and HisZ subunits.

Its subcellular location is the cytoplasm. It functions in the pathway amino-acid biosynthesis; L-histidine biosynthesis; L-histidine from 5-phospho-alpha-D-ribose 1-diphosphate: step 1/9. In terms of biological role, required for the first step of histidine biosynthesis. May allow the feedback regulation of ATP phosphoribosyltransferase activity by histidine. This chain is ATP phosphoribosyltransferase regulatory subunit, found in Rhizobium rhizogenes (strain K84 / ATCC BAA-868) (Agrobacterium radiobacter).